Here is a 301-residue protein sequence, read N- to C-terminus: Probable aspartoacylase (301 aa).

The Zn(2+) site is built by H13 and E16. Residues R54 and 61-62 (NR) contribute to the substrate site. Position 105 (H105) interacts with Zn(2+). E163 and Y273 together coordinate substrate.

This sequence belongs to the AspA/AstE family. Aspartoacylase subfamily. Zn(2+) is required as a cofactor.

The enzyme catalyses an N-acyl-L-aspartate + H2O = a carboxylate + L-aspartate. This chain is Probable aspartoacylase, found in Prochlorococcus marinus (strain MIT 9301).